Consider the following 33-residue polypeptide: MLFTLAWASLAAVFSFSIAMVVWGRNGDGSLNF.

Residues 2-22 (LFTLAWASLAAVFSFSIAMVV) form a helical membrane-spanning segment.

It belongs to the PetN family. The 4 large subunits of the cytochrome b6-f complex are cytochrome b6, subunit IV (17 kDa polypeptide, PetD), cytochrome f and the Rieske protein, while the 4 small subunits are PetG, PetL, PetM and PetN. The complex functions as a dimer.

The protein resides in the cellular thylakoid membrane. Its function is as follows. Component of the cytochrome b6-f complex, which mediates electron transfer between photosystem II (PSII) and photosystem I (PSI), cyclic electron flow around PSI, and state transitions. The polypeptide is Cytochrome b6-f complex subunit 8 (Prochlorococcus marinus (strain MIT 9303)).